Here is a 432-residue protein sequence, read N- to C-terminus: Glutamate-1-semialdehyde 2,1-aminomutase 1 (432 aa).

The residue at position 272 (Lys-272) is an N6-(pyridoxal phosphate)lysine.

It belongs to the class-III pyridoxal-phosphate-dependent aminotransferase family. HemL subfamily. As to quaternary structure, homodimer. Requires pyridoxal 5'-phosphate as cofactor.

Its subcellular location is the cytoplasm. The enzyme catalyses (S)-4-amino-5-oxopentanoate = 5-aminolevulinate. Its pathway is porphyrin-containing compound metabolism; protoporphyrin-IX biosynthesis; 5-aminolevulinate from L-glutamyl-tRNA(Glu): step 2/2. The chain is Glutamate-1-semialdehyde 2,1-aminomutase 1 from Exiguobacterium sp. (strain ATCC BAA-1283 / AT1b).